Consider the following 401-residue polypeptide: Multidrug resistance protein MdtH (401 aa).

Over 1–12 (MSRVSQARNLGK) the chain is Cytoplasmic. Residues 13–33 (YFLLIDNMLVVLGFFVVFPLV) form a helical membrane-spanning segment. At 34-98 (SIRFVDQMGW…GFATMGIAHE (65 aa)) the chain is on the periplasmic side. A helical membrane pass occupies residues 99–116 (PWLLWFSCLLSGLGGTLF). Over 117-137 (DPPRSALVVKLMPQQRGRFFS) the chain is Cytoplasmic. The chain crosses the membrane as a helical span at residues 138–158 (LLMMQDSAGAVIGALLGSWLL). Topologically, residues 159-163 (QYDFR) are periplasmic. The chain crosses the membrane as a helical span at residues 164–184 (LVCATGAVLFVLCAAFNAWLL). At 185 to 212 (PAWKLSTIRTPVREGMTRVMRDKRFVTY) the chain is on the cytoplasmic side. The helical transmembrane segment at 213–233 (VLTLAGYYMLAVQVMLMLPIM) threads the bilayer. The Periplasmic portion of the chain corresponds to 234-242 (VNDVAGAPS). The chain crosses the membrane as a helical span at residues 243-263 (AVKWMYAIEACLSLTLLYPIA). Residues 264-275 (RWSEKHFRLEHR) are Cytoplasmic-facing. Residues 276-296 (LMAGLLIMSLSMMPVGMVSGL) form a helical membrane-spanning segment. Residues 297–298 (QQ) are Periplasmic-facing. Residues 299 to 319 (LFTLICLFYIGSIIAEPARET) traverse the membrane as a helical segment. Topologically, residues 320–338 (LSASLADARARGSYMGFSR) are cytoplasmic. A helical transmembrane segment spans residues 339-359 (LGLAIGGTIGYIGGGWLFDLG). Topologically, residues 360-366 (KSAHQPE) are periplasmic. Residues 367–387 (LPWMMLGIIGIFTFLALGWQF) traverse the membrane as a helical segment. At 388–401 (SQKRAARRLLERDA) the chain is on the cytoplasmic side.

It belongs to the major facilitator superfamily. DHA1 family. MdtH (TC 2.A.1.2.21) subfamily.

Its subcellular location is the cell inner membrane. The polypeptide is Multidrug resistance protein MdtH (Shigella dysenteriae serotype 1 (strain Sd197)).